The following is a 74-amino-acid chain: MKLTCVLIVAVLFLTACQLIAADDSRDLQKFPRRKMRDGMLNTKNTKRQCLPPLHWCNMVDDECCHFCVLLACV.

Positions 1-22 are cleaved as a signal peptide; it reads MKLTCVLIVAVLFLTACQLIAA. Residues 23-46 constitute a propeptide that is removed on maturation; the sequence is DDSRDLQKFPRRKMRDGMLNTKNT. Residue Gln49 is modified to Pyrrolidone carboxylic acid. Intrachain disulfides connect Cys50/Cys65, Cys57/Cys68, and Cys64/Cys73.

This sequence belongs to the conotoxin O1 superfamily. As to expression, expressed by the venom duct.

The protein localises to the secreted. The chain is Conotoxin ArMKLT2-041 from Conus arenatus (Sand-dusted cone).